A 517-amino-acid polypeptide reads, in one-letter code: T-box transcription factor TBX5 (517 aa).

The segment at 1-46 (MADADEGFGLARTPLEPDSKDRSCDSKPESALGAPSKSPSSPQAAF) is disordered. Residues 15-28 (LEPDSKDRSCDSKP) are compositionally biased toward basic and acidic residues. Residues 34 to 45 (APSKSPSSPQAA) show a composition bias toward low complexity. A DNA-binding region (T-box) is located at residues 58 to 238 (LHERELWLKF…NNPFAKGFRG (181 aa)). Disordered stretches follow at residues 270 to 313 (HSPF…YPLA) and 331 to 369 (SSTE…SYRT). Residues 271–300 (SPFSSETRALSTSSNLGSQYQCENGVSGPS) are compositionally biased toward polar residues. Lys338 carries the post-translational modification N6-acetyllysine. Polar residues predominate over residues 357–369 (YPQQQGLSTSYRT).

In terms of assembly, monomer. Homodimer (via the T-box); binds DNA as homodimer. Interacts (via the T-box) with NKX2-5 (via the homeobox); this complex binds DNA. Interacts with GATA4. Interacts with KAT2A and KAT2B. Acetylation at Lys-338 by KAT2A and KAT2B promotes nuclear retention.

It localises to the nucleus. The protein resides in the cytoplasm. Its function is as follows. DNA-binding protein that regulates the transcription of several genes and is involved in heart development and limb pattern formation. Binds to the core DNA motif of NPPA promoter. This Rattus norvegicus (Rat) protein is T-box transcription factor TBX5 (Tbx5).